Here is a 406-residue protein sequence, read N- to C-terminus: MNALINLKQSREYTTVTIDGQNHHIKLAGTMDDPYFCGKDVCSILRYKDVKQALQNKVKPKNKKMLSVLVKQDHNAVGVQTTSTRLGSNSPLTYNEGKAIYINEPGLYALIMHSNAPFAEEFQDLVYEQILPSIRKYGSYQLEMQLTQAMEQLSIKERDVQEAHEARIKAERKAVRVDKFMRRIAIKERKLEWIYIATTQQYAQERLFKIGSTSRLNTRIGHYNVGRPAEDSYYYCWVTKCYNSKDIDYHIQKLLVDFKHKNNAELYCSIKFSDLVAIVSFIVQHYDASIDYINSFIKTRLVASFDEEDGIPPAIDIRTSLANQGLVVDQDDIDVLIPQELNDSINEKVKQNLEEIVIERKELISKLADKTNISKKDLWTRIKDLTGWSSSKTVIINGDLNYKIIY.

The Bro-N domain occupies 4–138 (LINLKQSREY…QILPSIRKYG (135 aa)). 2 coiled-coil regions span residues 141–177 (QLEM…AVRV) and 343–372 (DSIN…DKTN).

It belongs to the IIV-6 201R/289L family.

This Invertebrate iridescent virus 3 (IIV-3) protein is Putative Bro-N domain-containing protein 019R.